Reading from the N-terminus, the 163-residue chain is Secretory-abundant heat soluble protein 53582 (163 aa).

A signal peptide spans 1–19 (MARLFVAVALFGVVAFAAA). Positions 22–51 (EWTGKTWLGSWASTDRAENWEAFVDALGLP) are SAHS-c1. An SAHS-c2 region spans residues 67–95 (YKQGDKYHHEVSIPSKNFKKAIEYTLGTE). The interval 108 to 157 (KYTEDGEKLVADVQIPSKNKQIHDIYEVQGDTLTKTYKVGDVVAKRWFTR) is SAHS-c3.

It belongs to the Secretory-abundant heat soluble protein (SAHS) family.

Its subcellular location is the secreted. Its function is as follows. Secreted heat soluble protein acting as a molecular shield in water-deficient condition. Tardigrade-specific intrinsically disordered proteins (TDPs) are essential for desiccation tolerance by forming non-crystalline amorphous solids upon desiccation, and this vitrified state mirrors their protective capabilities. The polypeptide is Secretory-abundant heat soluble protein 53582 (Hypsibius exemplaris (Freshwater tardigrade)).